The chain runs to 314 residues: Nodulation protein D 1 (314 aa).

Residues 6-63 form the HTH lysR-type domain; it reads LDLNLLVALDAVMTARNLTAAARKINLSQPAMSAAIARLRTYFRDELFTMRGRELVPT. A DNA-binding region (H-T-H motif) is located at residues 23–42; the sequence is LTAAARKINLSQPAMSAAIA.

It belongs to the LysR transcriptional regulatory family.

Its function is as follows. NodD regulates the expression of the nodABCFE genes which encode other nodulation proteins. NodD is also a negative regulator of its own expression. Binds flavonoids as inducers. The chain is Nodulation protein D 1 (nodD1) from Bradyrhizobium diazoefficiens (strain JCM 10833 / BCRC 13528 / IAM 13628 / NBRC 14792 / USDA 110).